The following is a 228-amino-acid chain: Isoprenyl transferase (228 aa).

The active site involves D15. Residue D15 participates in Mg(2+) binding. Substrate is bound by residues 16–19 (GNGR), W20, R28, H32, and 60–62 (STE). Catalysis depends on N63, which acts as the Proton acceptor. Substrate-binding positions include W64, R66, R176, and 182–184 (RLS). Residue E195 coordinates Mg(2+).

The protein belongs to the UPP synthase family. In terms of assembly, homodimer. Requires Mg(2+) as cofactor.

Its function is as follows. Catalyzes the condensation of isopentenyl diphosphate (IPP) with allylic pyrophosphates generating different type of terpenoids. This Wolinella succinogenes (strain ATCC 29543 / DSM 1740 / CCUG 13145 / JCM 31913 / LMG 7466 / NCTC 11488 / FDC 602W) (Vibrio succinogenes) protein is Isoprenyl transferase.